The primary structure comprises 427 residues: Inward rectifier potassium channel 2 (427 aa).

The Cytoplasmic portion of the chain corresponds to 1–81 (MGSVRTNRYS…IFTTCVDIRW (81 aa)). A helical transmembrane segment spans residues 82 to 106 (RWMLVIFCLTFILSWLFFGCVFWLI). At 107–128 (ALLHGDLENQENNKPCVSQVSS) the chain is on the extracellular side. Residues 129-140 (FTAAFLFSIETQ) constitute an intramembrane region (helical; Pore-forming). An intramembrane region (pore-forming) is located at residues 141 to 147 (TTIGYGF). The Selectivity filter motif lies at 142–147 (TIGYGF). Residues 148-156 (RCVTDECPI) lie on the Extracellular side of the membrane. A helical membrane pass occupies residues 157–178 (AVFMVVFQSIVGCIIDAFIIGA). At 179 to 427 (VMAKMAKPKK…PRPLRRESEI (249 aa)) the chain is on the cytoplasmic side. The polyphosphoinositide (PIP2)-binding stretch occupies residues 181–208 (AKMAKPKKRNETLVFSHNAVVAMRDGKL). The tract at residues 386–427 (EEDEIDTGVPESTSTDTHPDMDHHNQAGVPLEPRPLRRESEI) is disordered. The short motif at 425-427 (SEI) is the PDZ-binding element.

Belongs to the inward rectifier-type potassium channel (TC 1.A.2.1) family. KCNJ2 subfamily. In terms of assembly, homotetramer. Homomultimeric and heteromultimeric association with KCNJ4/Kir2.3, resulting in an enhanced G-protein-induced current. Associates, via its PDZ-recognition domain, with a complex containing LIN7A, LIN7B, LIN7C, DLG1, CASK and APBA1. In terms of tissue distribution, found in the apical basilar papilla of the inner ear, brain, muscle, cerebellum, heart and liver.

The protein resides in the cell membrane. It is found in the sarcolemma. The protein localises to the T-tubule. It catalyses the reaction K(+)(in) = K(+)(out). With respect to regulation, activated by phosphatidylinositol 4,5 biphosphate (PtdIns(4,5)P2). In terms of biological role, inward rectifier potassium channels are characterized by a greater tendency to allow potassium to flow into the cell rather than out of it. Their voltage dependence is regulated by the concentration of extracellular potassium; as external potassium is raised, the voltage range of the channel opening shifts to more positive voltages. The inward rectification is mainly due to the blockage of outward current by internal magnesium. Can be blocked by external barium. Probably participates in establishing action potential waveform and excitability of neuronal and muscle tissues. This chain is Inward rectifier potassium channel 2 (KCNJ2), found in Gallus gallus (Chicken).